The chain runs to 415 residues: Histidine--tRNA ligase (415 aa).

The protein belongs to the class-II aminoacyl-tRNA synthetase family. As to quaternary structure, homodimer.

It localises to the cytoplasm. It carries out the reaction tRNA(His) + L-histidine + ATP = L-histidyl-tRNA(His) + AMP + diphosphate + H(+). The sequence is that of Histidine--tRNA ligase from Clostridium botulinum (strain Okra / Type B1).